We begin with the raw amino-acid sequence, 160 residues long: Lipoprotein signal peptidase (160 aa).

3 helical membrane passes run 13–33 (IYITTIIFILILDISSKRLII), 72–92 (WFLSTVSMLTILVMTRIITKL), and 104–124 (SLIIAGATGNLIDRIFYGFVV). Residues D125 and D143 contribute to the active site. The chain crosses the membrane as a helical span at residues 134–154 (WHFATFNIADCSIFIGIIILM).

The protein belongs to the peptidase A8 family.

Its subcellular location is the cell inner membrane. The enzyme catalyses Release of signal peptides from bacterial membrane prolipoproteins. Hydrolyzes -Xaa-Yaa-Zaa-|-(S,diacylglyceryl)Cys-, in which Xaa is hydrophobic (preferably Leu), and Yaa (Ala or Ser) and Zaa (Gly or Ala) have small, neutral side chains.. It participates in protein modification; lipoprotein biosynthesis (signal peptide cleavage). This protein specifically catalyzes the removal of signal peptides from prolipoproteins. This Buchnera aphidicola subsp. Acyrthosiphon pisum (strain 5A) protein is Lipoprotein signal peptidase.